The primary structure comprises 474 residues: Myocyte-specific enhancer factor 2C (474 aa).

The region spanning 3 to 57 (RKKIQITRIMDERNRQVTFTKRKFGLMKKAYELSVLCDCEIALIIFNSTNKLFQY) is the MADS-box domain. Lys4 is subject to N6-acetyllysine. Positions 58–86 (ASTDMDKVLLKYTEYNEPHESRTNSDIVE) form a DNA-binding region, mef2-type. Ser59 is subject to Phosphoserine; by CK2. The tract at residues 91-118 (KGLNGCDSPDPDADDSVGHSPESEDKYR) is disordered. Residues Ser98 and Ser106 each carry the phosphoserine modification. Gly108 carries the post-translational modification Phosphothreonine. At Ser110 the chain carries Phosphoserine. N6-acetyllysine is present on residues Lys116 and Lys119. Phosphoserine is present on residues Ser222 and Ser228. N6-acetyllysine is present on residues Lys234 and Lys239. Position 240 is a phosphoserine (Ser240). N6-acetyllysine is present on residues Lys252 and Lys264. The tract at residues 271–278 (SEDVDLLL) is beta domain. Thr293 and Thr300 each carry phosphothreonine; by MAPK14. A transcription repressor region spans residues 368-399 (ACTSTHLSQSSNLSLPSTQSLSIKSEPVSPPR). The segment covering 375 to 390 (SQSSNLSLPSTQSLSI) has biased composition (polar residues). Positions 375–474 (SQSSNLSLPS…RMRLSEGWAT (100 aa)) are disordered. Lys391 is covalently cross-linked (Glycyl lysine isopeptide (Lys-Gly) (interchain with G-Cter in SUMO)). Ser396 bears the Phosphoserine; by CDK5 mark. A Phosphoserine; by MAPK7 modification is found at Ser420. Low complexity predominate over residues 420–433 (SPVDSLSSCSSSYD). Residues 434–444 (GSDREDHRNEF) show a composition bias toward basic and acidic residues. The residue at position 446 (Ser446) is a Phosphoserine.

Belongs to the MEF2 family. As to quaternary structure, forms a complex with class II HDACs in undifferentiating cells. On myogenic differentiation, HDACs are released into the cytoplasm allowing MEF2s to interact with other proteins for activation. Interacts with EP300 in differentiating cells; the interaction acetylates MEF2C leading to increased DNA binding and activation. Interacts with HDAC7 and CARM1. Interacts with HDAC4, HDAC7 AND HDAC9; the interaction with HDACs represses transcriptional activity. Interacts with LPIN1. Interacts with MYOCD. Interacts with AKAP13. Interacts with FOXK1; the interaction inhibits MEF2C transactivation activity. Interacts (via N-terminus) with HABP4; this interaction decreases DNA-binding activity of MEF2C in myocardial cells in response to mechanical stress. Interacts with JPH2; interaction specifically takes place with the Junctophilin-2 N-terminal fragment cleavage product of JPH2. Interacts (via MADS box) with SOX18. Interacts with PHF7; the interaction promotes MEF2C binding to its transcription targets. In terms of processing, phosphorylation on Ser-59 enhances DNA binding activity. Phosphorylation on Ser-396 is required for Lys-391 sumoylation and inhibits transcriptional activity. Acetylated by p300 on several sites in diffentiating myocytes. Acetylation on Lys-4 increases DNA binding and transactivation. Post-translationally, sumoylated on Lys-391 with SUMO2 but not by SUMO1 represses transcriptional activity. In terms of processing, proteolytically cleaved in cerebellar granule neurons, probably by caspase 7, following neurotoxicity. Preferentially cleaves the CDK5-mediated hyperphosphorylated form which leads to neuron apoptosis and transcriptional inactivation. Widely expressed though mainly restricted to skeletal and cardiac muscle, brain, neurons and lymphocytes. Beta domain-lacking isoforms are the most predominantly expressed in all tissues including skeletal and cardiac muscle and brain. Only brain expresses all isoforms. Expression occurs primarily in the internal granule cell layer of the olfactory bulb, cortex, thalamus, hippocampus and cerebellum. Low levels in the cerebellum and hindbrain. Expressed throughout the cortex, including the frontal and entorhinal cortex, dentate gyrus, and basolateral amygdala. Selectively expressed in B-cells but not in T-cells, and its expression increases as B-cells mature.

The protein localises to the nucleus. It localises to the cytoplasm. The protein resides in the sarcoplasm. Its function is as follows. Transcription activator which binds specifically to the MEF2 element present in the regulatory regions of many muscle-specific genes. Controls cardiac morphogenesis and myogenesis, and is also involved in vascular development. Enhances transcriptional activation mediated by SOX18. May also be involved in neurogenesis and in the development of cortical architecture. Isoforms that lack the repressor domain are more active than isoform 1. Plays an essential role in hippocampal-dependent learning and memory by suppressing the number of excitatory synapses and thus regulating basal and evoked synaptic transmission. Crucial for normal neuronal development, distribution, and electrical activity in the neocortex. Necessary for proper development of megakaryocytes and platelets and for bone marrow B-lymphopoiesis. Required for B-cell survival and proliferation in response to BCR stimulation, efficient IgG1 antibody responses to T-cell-dependent antigens and for normal induction of germinal center B-cells. The polypeptide is Myocyte-specific enhancer factor 2C (Mus musculus (Mouse)).